Here is a 92-residue protein sequence, read N- to C-terminus: MKTELEQEKELLMMKGDALRMKLYAQSKPKQVTPHFTFADSLSMIASSLNQPVVRSLAVSLLSKKLLSSKFLTYSALGMIALYLLNRNNSTE.

This is an uncharacterized protein from Pasteurella multocida (strain Pm70).